The sequence spans 549 residues: NAC domain-containing protein 53 (549 aa).

One can recognise an NAC domain in the interval 9–159; that stretch reads LAPGFRFHPT…AFVLCRIFQK (151 aa). A DNA-binding region spans residues 108-165; it reads VGMKKTLVYHKGRAPRGERTNWVMHEYRLVDQDLDKTGVHQDAFVLCRIFQKSGSGPK. Residues 395–416 are compositionally biased toward basic and acidic residues; the sequence is LEKEETSRSKHVVEEKEKDEAS. The interval 395–418 is disordered; the sequence is LEKEETSRSKHVVEEKEKDEASCS. The helical transmembrane segment at 526–546 threads the bilayer; it reads LIFMCFWVLLLSVSFKVSILV.

As to expression, expressed in roots, rosette leaves, cauline leaves, shoot apex and stems.

The protein resides in the endoplasmic reticulum membrane. It is found in the nucleus. Functionally, transcriptional activator activated by proteolytic cleavage through regulated intramembrane proteolysis (RIP). Promotes reactive oxygen species (ROS) production during drought-induced leaf senescence. In response to abscisic acid (ABA)-mediated drought stress signals, binds directly to the promoters of RBOHC and RBOHE genes, encoding ROS biosynthetic enzymes, resulting in ROS accumulation and triggering leaf senescence via programmed cell death (PCD). ROS-induced leaf senescence sustains plant survival under drought conditions. Involved in heat stress response. Modulates PCD through a ROS-mediated positive feedback control under heat stress conditions. This may provide an adaptation strategy for plant survival under extreme heat stress conditions. Acts as a repressor in preventing anther dehiscence during stamen development by suppressing genes that participate in jasmonic acid (JA) biosynthesis, such as DAD1, AOS, AOC3, OPR3 and 4CLL5/OPCL1. The sequence is that of NAC domain-containing protein 53 from Arabidopsis thaliana (Mouse-ear cress).